We begin with the raw amino-acid sequence, 647 residues long: MTRLFIAEKPSLARAIADALPKPHKKEQGCIRCANGDIVTWCIGHLLEQVEPDAYDERYKKWNMADLPIIPEQWQLRPRKSSSQQLTVVRKLLKEATQIIHAGDPDREGQLLVDEVIDYCKVPKSKKETVQRLLISDLNLSAVKRALQGLRSNREFIPLSVSALARSRADWLYGMNMSRAYTLLGKKAGYQGVLSVGRVQTPVLGLVVRRDEEIEHFIPHDYFTLDALIPYQNGTEYFDIRARWKPSEACLPWQDEEGRVTNRKLVDNVASRIANQPATVTESEQDQTKQAAPLPYSLSALQIDAAKRYNFSAQQVLDLCQSLYEKHKLITYPRSDCRYLPKEHLAQAPDVVAAIANNAQEMVTAVNDADLSLRSKAWNDSKVDAHHAIIPTPKKASVNALSGHEMKVYQLIARQYLMQFYPAAIYAEAKLVFNIAGGIFIAKGRQLLSAGWKVLTGQQDEQEECVDKVPPLPVGIVLQCREGEIKQRQTEPPRHFTEATLLQAMTGIARFVADKELKKILRETDGLGTEATRAGILDTLFKRGLLQRDNKLIKSTPAGRGLIHALPSEATYPDMTAHWEHQLQAIAEKGQAYQPFMQTLQGRLEQLIEQVQVAPVPVSLQALPAVSKPAFKRTRRAPKSKARTYKA.

The region spanning 2–135 (TRLFIAEKPS…KKETVQRLLI (134 aa)) is the Toprim domain. Residues Glu8, Asp104, and Asp106 each coordinate Mg(2+). The region spanning 156–608 (FIPLSVSALA…TLQGRLEQLI (453 aa)) is the Topo IA-type catalytic domain. An interaction with DNA region spans residues 195-200 (SVGRVQ). Tyr332 functions as the O-(5'-phospho-DNA)-tyrosine intermediate in the catalytic mechanism.

It belongs to the type IA topoisomerase family. Mg(2+) is required as a cofactor.

The catalysed reaction is ATP-independent breakage of single-stranded DNA, followed by passage and rejoining.. In terms of biological role, releases the supercoiling and torsional tension of DNA, which is introduced during the DNA replication and transcription, by transiently cleaving and rejoining one strand of the DNA duplex. Introduces a single-strand break via transesterification at a target site in duplex DNA. The scissile phosphodiester is attacked by the catalytic tyrosine of the enzyme, resulting in the formation of a DNA-(5'-phosphotyrosyl)-enzyme intermediate and the expulsion of a 3'-OH DNA strand. The free DNA strand then undergoes passage around the unbroken strand, thus removing DNA supercoils. Finally, in the religation step, the DNA 3'-OH attacks the covalent intermediate to expel the active-site tyrosine and restore the DNA phosphodiester backbone. This is DNA topoisomerase 3 from Vibrio cholerae serotype O1 (strain ATCC 39315 / El Tor Inaba N16961).